The chain runs to 437 residues: Exosome complex component RRP45 (437 aa).

Phosphoserine is present on Ser65. Residue Lys297 is modified to N6-acetyllysine; alternate. Residue Lys297 forms a Glycyl lysine isopeptide (Lys-Gly) (interchain with G-Cter in SUMO1); alternate linkage. A Glycyl lysine isopeptide (Lys-Gly) (interchain with G-Cter in SUMO2); alternate cross-link involves residue Lys297. Residues Ser306 and Ser346 each carry the phosphoserine modification. The tract at residues 339-437 (IGEGIENSWG…KRRKKKRTAN (99 aa)) is disordered. The segment covering 349–363 (DLEDSEKEEEEEGGI) has biased composition (acidic residues). Phosphoserine is present on residues Ser392, Ser394, and Ser407. Over residues 413-425 (AQTSANQKAPSKS) the composition is skewed to polar residues. Residues 426 to 437 (QGKRRKKKRTAN) are compositionally biased toward basic residues.

This sequence belongs to the RNase PH family. As to quaternary structure, component of the RNA exosome core complex (Exo-9), composed of EXOSC1, EXOSC2, EXOSC3, EXOSC4, EXOSC5, EXOSC6, EXOSC7, EXOSC8 and EXOSC9; within the complex interacts with EXOSC3, EXOSC4, EXOSC5 and DIS3. The catalytically inactive RNA exosome core complex (Exo-9) associates with the catalytic subunit EXOSC10/RRP6. Exo-9 may associate with DIS3 to form the nucleolar exosome complex, or DIS3L to form the cytoplasmic exosome complex. Exo-9 is formed by a hexameric base ring consisting of the heterodimers EXOSC4-EXOSC9, EXOSC5-EXOSC8 and EXOSC6-EXOSC7, and a cap ring consisting of EXOSC1, EXOSC2 and EXOSC3. The RNA exosome complex associates with cofactors C1D/RRP47, MPHOSPH6/MPP6 and MTREX/MTR4. Interacts (via C-terminus region) with SETX (via N-terminus domain); the interaction enhances SETX sumoylation. Interacts with DIS3; the interaction is direct.

Its subcellular location is the cytoplasm. It localises to the nucleus. The protein localises to the nucleolus. It is found in the nucleoplasm. Functionally, non-catalytic component of the RNA exosome complex which has 3'-&gt;5' exoribonuclease activity and participates in a multitude of cellular RNA processing and degradation events. In the nucleus, the RNA exosome complex is involved in proper maturation of stable RNA species such as rRNA, snRNA and snoRNA, in the elimination of RNA processing by-products and non-coding 'pervasive' transcripts, such as antisense RNA species and promoter-upstream transcripts (PROMPTs), and of mRNAs with processing defects, thereby limiting or excluding their export to the cytoplasm. The RNA exosome may be involved in Ig class switch recombination (CSR) and/or Ig variable region somatic hypermutation (SHM) by targeting AICDA deamination activity to transcribed dsDNA substrates. In the cytoplasm, the RNA exosome complex is involved in general mRNA turnover and specifically degrades inherently unstable mRNAs containing AU-rich elements (AREs) within their 3' untranslated regions, and in RNA surveillance pathways, preventing translation of aberrant mRNAs. It seems to be involved in degradation of histone mRNA. The catalytic inactive RNA exosome core complex of 9 subunits (Exo-9) is proposed to play a pivotal role in the binding and presentation of RNA for ribonucleolysis, and to serve as a scaffold for the association with catalytic subunits and accessory proteins or complexes. EXOSC9 binds to ARE-containing RNAs. The sequence is that of Exosome complex component RRP45 (Exosc9) from Rattus norvegicus (Rat).